Consider the following 196-residue polypeptide: Protein TEX261 (196 aa).

The next 5 helical transmembrane spans lie at 3 to 23 (FMYV…TLAV), 42 to 62 (SRII…LYVF), 70 to 90 (IGVG…FPFI), 97 to 117 (FILS…FFAE), and 125 to 145 (VLAY…VSLS).

It belongs to the SVP26 family. In terms of tissue distribution, detected in testis.

The protein resides in the membrane. The chain is Protein TEX261 (Tex261) from Mus musculus (Mouse).